The sequence spans 168 residues: Co-chaperone protein HscB homolog (168 aa).

Residues Asp5–Ser77 form the J domain.

Belongs to the HscB family. In terms of assembly, interacts with HscA and stimulates its ATPase activity.

Functionally, co-chaperone involved in the maturation of iron-sulfur cluster-containing proteins. Seems to help targeting proteins to be folded toward HscA. This is Co-chaperone protein HscB homolog from Bordetella avium (strain 197N).